A 355-amino-acid polypeptide reads, in one-letter code: Protein FIP1 (355 aa).

4 helical membrane-spanning segments follow: residues 42 to 62, 72 to 92, 113 to 133, and 149 to 169; these read YLYM…PWMF, LLCC…QYFV, VVRL…LVIV, and IIML…IGYV. The stretch at 220 to 337 forms a coiled coil; that stretch reads LHFLSEEILC…RMSNSELQKE (118 aa). The segment covering 331 to 340 has biased composition (basic and acidic residues); the sequence is NSELQKEVAS. A disordered region spans residues 331–355; sequence NSELQKEVASTRRKQMLETTTSEQP.

The protein belongs to the TMEM192 family. In terms of assembly, interacts with FRI.

It is found in the membrane. The chain is Protein FIP1 from Arabidopsis thaliana (Mouse-ear cress).